We begin with the raw amino-acid sequence, 156 residues long: ATP synthase subunit b (156 aa).

A helical transmembrane segment spans residues 7–27 (LFVQAIVFLILVLFTMKFVWP).

Belongs to the ATPase B chain family. As to quaternary structure, F-type ATPases have 2 components, F(1) - the catalytic core - and F(0) - the membrane proton channel. F(1) has five subunits: alpha(3), beta(3), gamma(1), delta(1), epsilon(1). F(0) has three main subunits: a(1), b(2) and c(10-14). The alpha and beta chains form an alternating ring which encloses part of the gamma chain. F(1) is attached to F(0) by a central stalk formed by the gamma and epsilon chains, while a peripheral stalk is formed by the delta and b chains.

The protein localises to the cell inner membrane. Functionally, f(1)F(0) ATP synthase produces ATP from ADP in the presence of a proton or sodium gradient. F-type ATPases consist of two structural domains, F(1) containing the extramembraneous catalytic core and F(0) containing the membrane proton channel, linked together by a central stalk and a peripheral stalk. During catalysis, ATP synthesis in the catalytic domain of F(1) is coupled via a rotary mechanism of the central stalk subunits to proton translocation. Component of the F(0) channel, it forms part of the peripheral stalk, linking F(1) to F(0). The sequence is that of ATP synthase subunit b from Delftia acidovorans (strain DSM 14801 / SPH-1).